The chain runs to 128 residues: Calcitonin gene-related peptide 1 (128 aa).

An N-terminal signal peptide occupies residues 1–25 (MGFLKFSPFLVVSILLLYQACGLQA). Residues 26–80 (VPLRSTLESSPGMAATLSEEEARLLLAALVQNYMQMKVRELEQEQEAEGSSVTAQ) constitute a propeptide that is removed on maturation. A disulfide bond links Cys-84 and Cys-89. Phe-119 is subject to Phenylalanine amide. A propeptide spanning residues 125 to 128 (DLQA) is cleaved from the precursor.

The protein belongs to the calcitonin family.

The protein resides in the secreted. Functionally, CGRP1/CALCA is a peptide hormone that induces vasodilation mediated by the CALCRL-RAMP1 receptor complex. Dilates a variety of vessels including the coronary, cerebral and systemic vasculature. Its abundance in the CNS also points toward a neurotransmitter or neuromodulator role. It also elevates platelet cAMP. CGRP1 can also bind and activate CALCR-RAMP1 (AMYR1) receptor complex. The sequence is that of Calcitonin gene-related peptide 1 from Rattus norvegicus (Rat).